Consider the following 800-residue polypeptide: Cell division cycle 5-like protein (800 aa).

HTH myb-type domains lie at 1–56 (MRNV…DPSI) and 57–106 (KKTE…DEVQ). 2 consecutive DNA-binding regions (H-T-H motif) follow at residues 29–52 (WARI…HEWL) and 80–102 (WKTI…NRLL). Disordered regions lie at residues 109–186 (QDNE…KRKF), 334–378 (YEKL…NIRT), 399–445 (QTPL…KQSL), and 571–610 (NKTF…NDND). A compositionally biased stretch (gly residues) spans 113–122 (NGGGSGGGGT). Basic and acidic residues predominate over residues 133 to 142 (NDPRRLRMGD). Residues 340–351 (SGSGGGSGGVGV) show a composition bias toward gly residues. Low complexity predominate over residues 361–376 (TASISSTAANNNTNNI). Composition is skewed to polar residues over residues 409 to 445 (NVSQ…KQSL) and 573 to 584 (TFPNDSITPSST). Over residues 592–601 (DNHHHHHDDI) the composition is skewed to basic and acidic residues. Coiled coils occupy residues 621–700 (NTEL…KIKN) and 748–800 (VALK…LSIF).

The protein belongs to the CEF1 family. In terms of assembly, component of the precatalytic, catalytic and postcatalytic spliceosome complexes.

The protein localises to the nucleus. It localises to the cytoplasm. Its function is as follows. DNA-binding protein involved in cell cycle control. May act as a transcription activator. Plays a role in pre-mRNA splicing as core component of precatalytic, catalytic and postcatalytic spliceosomal complexes. May also play a role in the response to DNA damage (DDR). This Dictyostelium discoideum (Social amoeba) protein is Cell division cycle 5-like protein (cdc5l).